A 661-amino-acid polypeptide reads, in one-letter code: WD repeat-containing protein 26 (661 aa).

Residues 1–27 (MQANGAGGGGGGGGGGGGGGGGGGGQG) are compositionally biased toward gly residues. Disordered regions lie at residues 1–70 (MQAN…ASNN) and 99–118 (TAAS…KKKK). Composition is skewed to low complexity over residues 56 to 70 (ANGL…ASNN) and 99 to 113 (TAAS…LGSS). 2 positions are modified to phosphoserine: Ser121 and Ser123. One can recognise a LisH domain in the interval 123–155 (SDEDVIRLIGQHLNGLGLNQTVDLLMQESGCRL). The region spanning 156 to 231 (EHPSATKFRN…EYLEDGKVLE (76 aa)) is the CTLH domain. WD repeat units follow at residues 353 to 392 (EHCN…HLLK), 399 to 438 (GHAY…GELR), 444 to 484 (SHED…DSWE), 524 to 563 (QEDH…LVRK), 566 to 608 (GVTQ…PIAE), and 611 to 651 (GHTR…DHQN).

Forms homooligomers. Identified in the CTLH complex that contains GID4, RANBP9 and/or RANBP10, MKLN1, MAEA, RMND5A (or alternatively its paralog RMND5B), GID8, ARMC8, WDR26 and YPEL5. Within this complex, MAEA, RMND5A (or alternatively its paralog RMND5B), GID8, WDR26, and RANBP9 and/or RANBP10 form the catalytic core, while GID4, MKLN1, ARMC8 and YPEL5 have ancillary roles. Interacts with DDB1-CUL4A/B E3 ligase complexes. Forms a complex composed of at least WDR26, a G-beta:gamma unit, and PLCB2. Interacts with AXIN1. Broadly expressed, with highest levels in heart and skeletal muscle.

Its subcellular location is the cytoplasm. It is found in the nucleus. It localises to the mitochondrion. Functionally, G-beta-like protein involved in cell signal transduction. Acts as a negative regulator in MAPK signaling pathway. Functions as a scaffolding protein to promote G beta:gamma-mediated PLCB2 plasma membrane translocation and subsequent activation in leukocytes. Core component of the CTLH E3 ubiquitin-protein ligase complex that selectively accepts ubiquitin from UBE2H and mediates ubiquitination and subsequent proteasomal degradation of the transcription factor HBP1. Acts as a negative regulator of the canonical Wnt signaling pathway through preventing ubiquitination of beta-catenin CTNNB1 by the beta-catenin destruction complex, thus negatively regulating CTNNB1 degradation. Serves as a scaffold to coordinate PI3K/AKT pathway-driven cell growth and migration. Protects cells from oxidative stress-induced apoptosis via the down-regulation of AP-1 transcriptional activity as well as by inhibiting cytochrome c release from mitochondria. Also protects cells by promoting hypoxia-mediated autophagy and mitophagy. The chain is WD repeat-containing protein 26 (WDR26) from Homo sapiens (Human).